We begin with the raw amino-acid sequence, 197 residues long: FMN-dependent NADH:quinone oxidoreductase (197 aa).

Residues S10 and 16 to 18 (SIS) each bind FMN.

This sequence belongs to the azoreductase type 1 family. In terms of assembly, homodimer. The cofactor is FMN.

The enzyme catalyses 2 a quinone + NADH + H(+) = 2 a 1,4-benzosemiquinone + NAD(+). It carries out the reaction N,N-dimethyl-1,4-phenylenediamine + anthranilate + 2 NAD(+) = 2-(4-dimethylaminophenyl)diazenylbenzoate + 2 NADH + 2 H(+). Its function is as follows. Quinone reductase that provides resistance to thiol-specific stress caused by electrophilic quinones. In terms of biological role, also exhibits azoreductase activity. Catalyzes the reductive cleavage of the azo bond in aromatic azo compounds to the corresponding amines. This chain is FMN-dependent NADH:quinone oxidoreductase, found in Erythrobacter litoralis (strain HTCC2594).